Consider the following 270-residue polypeptide: Formamidopyrimidine-DNA glycosylase (270 aa).

The Schiff-base intermediate with DNA role is filled by P2. E3 functions as the Proton donor in the catalytic mechanism. The active-site Proton donor; for beta-elimination activity is K58. Residues H91, R110, and R151 each coordinate DNA. The FPG-type zinc-finger motif lies at L236 to R270. The active-site Proton donor; for delta-elimination activity is the R260.

The protein belongs to the FPG family. As to quaternary structure, monomer. Zn(2+) serves as cofactor.

The enzyme catalyses Hydrolysis of DNA containing ring-opened 7-methylguanine residues, releasing 2,6-diamino-4-hydroxy-5-(N-methyl)formamidopyrimidine.. It carries out the reaction 2'-deoxyribonucleotide-(2'-deoxyribose 5'-phosphate)-2'-deoxyribonucleotide-DNA = a 3'-end 2'-deoxyribonucleotide-(2,3-dehydro-2,3-deoxyribose 5'-phosphate)-DNA + a 5'-end 5'-phospho-2'-deoxyribonucleoside-DNA + H(+). Functionally, involved in base excision repair of DNA damaged by oxidation or by mutagenic agents. Acts as a DNA glycosylase that recognizes and removes damaged bases. Has a preference for oxidized purines, such as 7,8-dihydro-8-oxoguanine (8-oxoG). Has AP (apurinic/apyrimidinic) lyase activity and introduces nicks in the DNA strand. Cleaves the DNA backbone by beta-delta elimination to generate a single-strand break at the site of the removed base with both 3'- and 5'-phosphates. The sequence is that of Formamidopyrimidine-DNA glycosylase from Stenotrophomonas maltophilia (strain K279a).